A 560-amino-acid chain; its full sequence is MSLISILSPLITSEGLDSRIKPSPKKDASTTTKPSLWKTTEFKFYYIAFLVVVPLMFYAGLQASSPENPNYARYERLLSQGWLFGRKVDNSDSQYRFFRDNFALLSVLMLVHTSIKRIVLYSTNITKLRFDLIFGLIFLVAAHGVNSIRILAHMLILYAIAHVLKNFRRIATISIWIYGISTLFINDNFRAYPFGNICSFLSPLDHWYRGIIPRWDVFFNFTLLRVLSYNLDFLERWENLQKKKSPSYESKEAKSAILLNERARLTAAHPIQDYSLMNYIAYVTYTPLFIAGPIITFNDYVYQSKHTLPSINFKFIFYYAVRFVIALLSMEFILHFLHVVAISKTKAWENDTPFQISMIGLFNLNIIWLKLLIPWRLFRLWALLDGIDTPENMIRCVDNNYSSLAFWRAWHRSYNKWVVRYIYIPLGGSKNRVLTSLAVFSFVAIWHDIELKLLLWGWLIVLFLLPEIFATQIFSHYTDAVWYRHVCAVGAVFNIWVMMIANLFGFCLGSDGTKKLLSDMFCTVSGFKFVILASVSLFIAVQIMFEIREEEKRHGIYLKC.

Topologically, residues 1-43 (MSLISILSPLITSEGLDSRIKPSPKKDASTTTKPSLWKTTEFK) are extracellular. Residues 44–64 (FYYIAFLVVVPLMFYAGLQAS) traverse the membrane as a helical segment. The Cytoplasmic segment spans residues 65 to 101 (SPENPNYARYERLLSQGWLFGRKVDNSDSQYRFFRDN). Residues 102–122 (FALLSVLMLVHTSIKRIVLYS) form a helical membrane-spanning segment. Over 123–131 (TNITKLRFD) the chain is Extracellular. A helical transmembrane segment spans residues 132–152 (LIFGLIFLVAAHGVNSIRILA). Topologically, residues 153–165 (HMLILYAIAHVLK) are cytoplasmic. A helical membrane pass occupies residues 166–185 (NFRRIATISIWIYGISTLFI). Over 186–276 (NDNFRAYPFG…AAHPIQDYSL (91 aa)) the chain is Extracellular. The chain crosses the membrane as a helical span at residues 277–297 (MNYIAYVTYTPLFIAGPIITF). Residues 298–322 (NDYVYQSKHTLPSINFKFIFYYAVR) are Cytoplasmic-facing. Residues 323–343 (FVIALLSMEFILHFLHVVAIS) form a helical membrane-spanning segment. The Extracellular segment spans residues 344–352 (KTKAWENDT). Residues 353–373 (PFQISMIGLFNLNIIWLKLLI) form a helical membrane-spanning segment. Residues 374–432 (PWRLFRLWALLDGIDTPENMIRCVDNNYSSLAFWRAWHRSYNKWVVRYIYIPLGGSKNR) lie on the Cytoplasmic side of the membrane. 2 consecutive transmembrane segments (helical) span residues 433–453 (VLTSLAVFSFVAIWHDIELKL) and 454–474 (LLWGWLIVLFLLPEIFATQIF). H447 is a catalytic residue. Topologically, residues 475–485 (SHYTDAVWYRH) are cytoplasmic. A helical membrane pass occupies residues 486–506 (VCAVGAVFNIWVMMIANLFGF). At 507–526 (CLGSDGTKKLLSDMFCTVSG) the chain is on the extracellular side. Residues 527 to 547 (FKFVILASVSLFIAVQIMFEI) form a helical membrane-spanning segment. Residues 548 to 560 (REEEKRHGIYLKC) are Cytoplasmic-facing.

This sequence belongs to the membrane-bound acyltransferase family. As to quaternary structure, interacts with mitochondrial outer membrane voltage-dependent anion channel (VDAC) POR1.

It is found in the cell membrane. It localises to the endoplasmic reticulum membrane. The protein resides in the mitochondrion membrane. Membrane-bound O-acyltransferase involved in the remodeling of glycosylphosphatidylinositol (GPI) anchors. Acts only on GPI-anchored proteins, but not on free GPI lipids. Acts as an acyltransferase for GPI anchors that adds C26 fatty acids to the sn2 position of lyso-PI-containing GPI anchors. PER1 first deacylates, GUP1 subsequently reacylates the anchor lipid, thus replacing a shorter fatty acid (C16:0 or C18:0) by C26:0. Also involved in lipid metabolism, having profound effects on sphingolipid-sterol-ordered domains integrity and assembly. Together with GUP2, has an influence on the chemical composition of the yeast extracellular matrix (yECM) in yeast multicellular aggregates, such as biofilms and colonies. Involved in cell integrity and apoptosis. The sequence is that of Membrane-bound O-acyltransferase GUP1 (GUP1) from Saccharomyces cerevisiae (strain ATCC 204508 / S288c) (Baker's yeast).